We begin with the raw amino-acid sequence, 845 residues long: Protein P (845 aa).

The tract at residues 1-179 is terminal protein domain (TP); sequence MPLSYQHFRK…FCGSPYSWEQ (179 aa). Residues 180-348 are spacer; it reads ELQHGRLVIK…YCLSHLVNLR (169 aa). Positions 226-252 are disordered; it reads GLQPRQGRLASSQPSRSGSIRAKAHPS. Over residues 234–243 the composition is skewed to polar residues; sequence LASSQPSRSG. The segment at 349–692 is polymerase/reverse transcriptase domain (RT); that stretch reads EDWGPCDEHG…YMNLYPVARQ (344 aa). The 244-residue stretch at 359-602 folds into the Reverse transcriptase domain; that stretch reads EHHIRIPRTP…YSLNFMGYII (244 aa). Positions 431, 553, and 554 each coordinate Mg(2+). Residues 693-845 are rnaseH domain (RH); that stretch reads RPGLCQVFAD…SPLHVAWRPP (153 aa).

Belongs to the hepadnaviridae P protein family.

The catalysed reaction is DNA(n) + a 2'-deoxyribonucleoside 5'-triphosphate = DNA(n+1) + diphosphate. It catalyses the reaction Endonucleolytic cleavage to 5'-phosphomonoester.. With respect to regulation, activated by host HSP70 and HSP40 in vitro to be able to bind the epsilon loop of the pgRNA. Because deletion of the RNase H region renders the protein partly chaperone-independent, the chaperones may be needed indirectly to relieve occlusion of the RNA-binding site by this domain. Inhibited by several reverse-transcriptase inhibitors: Lamivudine, Adefovir and Entecavir. Multifunctional enzyme that converts the viral RNA genome into dsDNA in viral cytoplasmic capsids. This enzyme displays a DNA polymerase activity that can copy either DNA or RNA templates, and a ribonuclease H (RNase H) activity that cleaves the RNA strand of RNA-DNA heteroduplexes in a partially processive 3'- to 5'-endonucleasic mode. Neo-synthesized pregenomic RNA (pgRNA) are encapsidated together with the P protein, and reverse-transcribed inside the nucleocapsid. Initiation of reverse-transcription occurs first by binding the epsilon loop on the pgRNA genome, and is initiated by protein priming, thereby the 5'-end of (-)DNA is covalently linked to P protein. Partial (+)DNA is synthesized from the (-)DNA template and generates the relaxed circular DNA (RC-DNA) genome. After budding and infection, the RC-DNA migrates in the nucleus, and is converted into a plasmid-like covalently closed circular DNA (cccDNA). The activity of P protein does not seem to be necessary for cccDNA generation, and is presumably released from (+)DNA by host nuclear DNA repair machinery. The polypeptide is Protein P (Homo sapiens (Human)).